A 100-amino-acid polypeptide reads, in one-letter code: Small ribosomal subunit protein uS14c (100 aa).

This sequence belongs to the universal ribosomal protein uS14 family. In terms of assembly, part of the 30S ribosomal subunit.

The protein resides in the plastid. The protein localises to the chloroplast. Its function is as follows. Binds 16S rRNA, required for the assembly of 30S particles. The polypeptide is Small ribosomal subunit protein uS14c (Phalaenopsis aphrodite subsp. formosana (Moth orchid)).